The primary structure comprises 483 residues: Rhamnulokinase (483 aa).

11-15 is an ATP binding site; the sequence is ASSGR. Residues G79 and 234–236 each bind substrate; that span reads HDT. The Proton acceptor role is filled by D235. Position 257 (T257) interacts with ATP. Residue N294 participates in substrate binding. ATP is bound at residue Q302. An intrachain disulfide couples C352 to C369. ATP is bound at residue G401.

It belongs to the rhamnulokinase family. Requires Mg(2+) as cofactor.

The catalysed reaction is L-rhamnulose + ATP = L-rhamnulose 1-phosphate + ADP + H(+). It participates in carbohydrate degradation; L-rhamnose degradation; glycerone phosphate from L-rhamnose: step 2/3. Functionally, involved in the catabolism of L-rhamnose (6-deoxy-L-mannose). Catalyzes the transfer of the gamma-phosphate group from ATP to the 1-hydroxyl group of L-rhamnulose to yield L-rhamnulose 1-phosphate. This Listeria innocua serovar 6a (strain ATCC BAA-680 / CLIP 11262) protein is Rhamnulokinase.